The primary structure comprises 103 residues: UPF0145 protein PERMA_0324 (103 aa).

The protein belongs to the UPF0145 family.

The chain is UPF0145 protein PERMA_0324 from Persephonella marina (strain DSM 14350 / EX-H1).